A 116-amino-acid chain; its full sequence is uncharacterized protein (116 aa).

The next 2 membrane-spanning stretches (helical) occupy residues 55–77 (LSYS…LYSF) and 87–109 (FSYG…YAAL).

Its subcellular location is the membrane. This is an uncharacterized protein from Saccharomyces cerevisiae (strain ATCC 204508 / S288c) (Baker's yeast).